Consider the following 1045-residue polypeptide: Extracellular serine protease (1045 aa).

Positions 1–27 (MILNKKLKLAYCVFLGCYGLSLHSSLA) are cleaved as a signal peptide. The 348-residue stretch at 49-396 (QWGLEAISAE…WGRVNLRDAI (348 aa)) folds into the Peptidase S8 domain. Residues Asp-76, His-112, and Ser-341 each act as charge relay system in the active site. A propeptide spanning residues 646 to 1045 (SLASTENDKE…SVNAGLTWRF (400 aa)) is cleaved from the precursor. In terms of domain architecture, Autotransporter spans 769–1045 (IKADDNGAWA…SVNAGLTWRF (277 aa)).

It belongs to the peptidase S8 family.

It is found in the secreted. The chain is Extracellular serine protease from Serratia marcescens.